The primary structure comprises 906 residues: DNA gyrase subunit A (906 aa).

The 490-residue stretch at 35–524 folds into the Topo IIA-type catalytic domain; it reads IPDVRDGLKP…GEFDQDIEDL (490 aa). Residue tyrosine 123 is the O-(5'-phospho-DNA)-tyrosine intermediate of the active site. Positions 551–557 match the GyrA-box motif; the sequence is QKRGGKG. Positions 886–906 are disordered; sequence SESEEDSELEEDLEQAEEVYT.

This sequence belongs to the type II topoisomerase GyrA/ParC subunit family. In terms of assembly, heterotetramer, composed of two GyrA and two GyrB chains. In the heterotetramer, GyrA contains the active site tyrosine that forms a transient covalent intermediate with DNA, while GyrB binds cofactors and catalyzes ATP hydrolysis.

The protein localises to the cytoplasm. The enzyme catalyses ATP-dependent breakage, passage and rejoining of double-stranded DNA.. Functionally, a type II topoisomerase that negatively supercoils closed circular double-stranded (ds) DNA in an ATP-dependent manner to modulate DNA topology and maintain chromosomes in an underwound state. Negative supercoiling favors strand separation, and DNA replication, transcription, recombination and repair, all of which involve strand separation. Also able to catalyze the interconversion of other topological isomers of dsDNA rings, including catenanes and knotted rings. Type II topoisomerases break and join 2 DNA strands simultaneously in an ATP-dependent manner. The chain is DNA gyrase subunit A from Rickettsia felis (strain ATCC VR-1525 / URRWXCal2) (Rickettsia azadi).